A 104-amino-acid polypeptide reads, in one-letter code: Large ribosomal subunit protein bL21 (104 aa).

This sequence belongs to the bacterial ribosomal protein bL21 family. Part of the 50S ribosomal subunit. Contacts protein L20.

Functionally, this protein binds to 23S rRNA in the presence of protein L20. This is Large ribosomal subunit protein bL21 from Clostridium botulinum (strain 657 / Type Ba4).